The primary structure comprises 160 residues: Transcription antitermination protein NusB (160 aa).

This sequence belongs to the NusB family.

In terms of biological role, involved in transcription antitermination. Required for transcription of ribosomal RNA (rRNA) genes. Binds specifically to the boxA antiterminator sequence of the ribosomal RNA (rrn) operons. The chain is Transcription antitermination protein NusB from Gluconobacter oxydans (strain 621H) (Gluconobacter suboxydans).